Reading from the N-terminus, the 87-residue chain is Small ribosomal subunit protein uS15 (87 aa).

The protein belongs to the universal ribosomal protein uS15 family. In terms of assembly, part of the 30S ribosomal subunit. Forms a bridge to the 50S subunit in the 70S ribosome, contacting the 23S rRNA.

One of the primary rRNA binding proteins, it binds directly to 16S rRNA where it helps nucleate assembly of the platform of the 30S subunit by binding and bridging several RNA helices of the 16S rRNA. Its function is as follows. Forms an intersubunit bridge (bridge B4) with the 23S rRNA of the 50S subunit in the ribosome. The chain is Small ribosomal subunit protein uS15 from Clostridium kluyveri (strain NBRC 12016).